Reading from the N-terminus, the 462-residue chain is BPI fold-containing family B member 2 (462 aa).

Positions 1-22 (MARACSLGLLLLLLLLLRTVVT) are cleaved as a signal peptide. Position 55 is a phosphothreonine (threonine 55). Position 63 is a phosphoserine (serine 63). N-linked (GlcNAc...) asparagine glycosylation is present at asparagine 99. Cysteines 140 and 177 form a disulfide. Asparagine 297 and asparagine 336 each carry an N-linked (GlcNAc...) asparagine glycan.

This sequence belongs to the BPI/LBP/Plunc superfamily. BPI/LBP family.

Its subcellular location is the secreted. The protein is BPI fold-containing family B member 2 (Bpifb2) of Mus musculus (Mouse).